The chain runs to 202 residues: MALVIGLTGGIASGKTTVANLFQQHFAIDIVDADIVARQVVAPGSAGLAAIVDHFGADILTCEGELDRGQLRQRIFAHSEEKQWLNALLHPMIRRKMIEDLAQVSSPYALLVVPLLVENQLQTLCDRVLVVDVEEKTQLQRTMDRDSVDEQQVRAILKAQASRHERLALADDVIKNESKDQDLLQQITDLHQKYLAMSKQNR.

In terms of domain architecture, DPCK spans 4-201; it reads VIGLTGGIAS…QKYLAMSKQN (198 aa). 12–17 contacts ATP; that stretch reads ASGKTT.

This sequence belongs to the CoaE family.

It is found in the cytoplasm. It carries out the reaction 3'-dephospho-CoA + ATP = ADP + CoA + H(+). Its pathway is cofactor biosynthesis; coenzyme A biosynthesis; CoA from (R)-pantothenate: step 5/5. Catalyzes the phosphorylation of the 3'-hydroxyl group of dephosphocoenzyme A to form coenzyme A. The chain is Dephospho-CoA kinase from Vibrio vulnificus (strain CMCP6).